We begin with the raw amino-acid sequence, 333 residues long: Fructose-1,6-bisphosphatase class 1 (333 aa).

Positions 90, 112, 114, and 115 each coordinate Mg(2+). Residues 115 to 118 (DGSS), N207, and K273 each bind substrate. E279 lines the Mg(2+) pocket.

This sequence belongs to the FBPase class 1 family. In terms of assembly, homotetramer. Requires Mg(2+) as cofactor.

It localises to the cytoplasm. It catalyses the reaction beta-D-fructose 1,6-bisphosphate + H2O = beta-D-fructose 6-phosphate + phosphate. The protein operates within carbohydrate biosynthesis; gluconeogenesis. This is Fructose-1,6-bisphosphatase class 1 from Azoarcus sp. (strain BH72).